Consider the following 909-residue polypeptide: MSRLSKDIDSAFQGVGTKSGLEIWCVYNKQLISIPKSSFGKFHSGNAYLVLRTFLRKIESPQYDIHYWLGIDANEVDSILASDKALDLDAALGCCTVQYREVQGQETEKFLSYFKPCIIPVEGKYSPKTGIAGETYQVTLLRCKGDHVVRVKEVPFLRSSLNHDDVFILDTASKVFLFAGCNSSTQEKAKAMEVVEYIKDNKHDGRCEVATIEDGKFSGDSDAGEFWSFFGGYAPIPKLSSSTTQEQTQTPCAELFWIDTKGNLHPTGTSSLDKDMLEKNKCYMLDCHSEVFVWMGRNTSLTERKTSISSSEEFLRKEGRSTTTSLVLLTEGLENARFRSFFNKWPQTVESSLYNEGREKVAALFKQKGYDVEELPDEEDDPLYTNCRDNLKVWRVDGDDVSLLSIPDQTKLFTGDCYLVQYKYTYKERTEHLLYVWIGCESIQQDRADAITNASAIVGTTKGESVLCHIYQGNEPSRFFPMFQSLVVFKGGLSRRYKVLLAEKEKIGEEYNENKASLFRVVGTSPRNMQAIQVNLVATSLNSSYSYILQYGASAFTWIGKLSSDSDHEVLDRMLYFLDTSCQPIYIREGNETDTFWNLLGGKSEYPKEKEMRKQIEEPHLFTCSCSSDVLKVKEIYNFVQDDLTTEDVFLLDCQSEVYVWIGSNSNIKSKEEALTLGLKFLEMDILEEGLTMRTPVYVVTEGHEPPFFTRFFEWVPEKANMHGNSFERKLASLKGKKTSTKRSSGSQYRSQSKDNASRDLQSRSVSSNGSERGVSPCSSEKLLSLSSAEDMTNSSNSTPVVKKLFSESLLVDPNDGVARQESSSKSDISKQKPRVGINSDLSSLESLAYSYEQLRVDSQKPVTDIDATRREAYLTEKEFEERFGMAKSEFYALPKWKQNKLKISLHLF.

6 Gelsolin-like repeats span residues 29–79 (KQLI…VDSI), 149–189 (VRVK…QEKA), 262–305 (GNLH…TERK), 391–448 (LKVW…QDRA), 529–569 (MQAI…SDHE), and 631–672 (LKVK…KSKE). Disordered regions lie at residues 733-781 (SLKG…CSSE) and 816-835 (DGVARQESSSKSDISKQKPR). Basic and acidic residues predominate over residues 752-762 (QSKDNASRDLQ). At serine 780 the chain carries Phosphoserine. The region spanning 844–909 (SLESLAYSYE…NKLKISLHLF (66 aa)) is the HP domain.

It belongs to the villin/gelsolin family. As to expression, expressed in all tissues examined. Mainly detected in the vascular tissue and the pericycle of roots and in the vasculature of leaves. Not expressed in the root cap.

The protein localises to the cytoplasm. It is found in the cytoskeleton. Its function is as follows. Binds actin and actin filament bundles in a Ca(2+)/calmodulin-insensitive manner, but is unable to sever, cap, and nucleate actin filament formation in vitro. Does not protect individual filaments from severing by VLN3 (AC O81645). This is Villin-1 from Arabidopsis thaliana (Mouse-ear cress).